The chain runs to 485 residues: Adenosylhomocysteinase (485 aa).

Residues threonine 64, aspartate 139, and glutamate 205 each contribute to the substrate site. 206 to 208 (TTT) serves as a coordination point for NAD(+). Lysine 235 and aspartate 239 together coordinate substrate. NAD(+)-binding positions include asparagine 240, 269-274 (GYGDVG), glutamate 292, asparagine 327, 348-350 (IGH), and asparagine 397.

Belongs to the adenosylhomocysteinase family. Requires NAD(+) as cofactor.

The enzyme catalyses S-adenosyl-L-homocysteine + H2O = L-homocysteine + adenosine. It participates in amino-acid biosynthesis; L-homocysteine biosynthesis; L-homocysteine from S-adenosyl-L-homocysteine: step 1/1. Functionally, adenosylhomocysteine is a competitive inhibitor of S-adenosyl-L-methionine-dependent methyl transferase reactions; therefore adenosylhomocysteinase may play a key role in the control of methylations via regulation of the intracellular concentration of adenosylhomocysteine. This Lupinus luteus (European yellow lupine) protein is Adenosylhomocysteinase (SAHH).